Here is a 299-residue protein sequence, read N- to C-terminus: Somaliensene A/B synthase (299 aa).

7 consecutive transmembrane segments (helical) span residues 32–49 (WTTL…AVHT), 56–72 (TAVA…LFVY), 110–132 (IAVR…ALLW), 153–171 (LYAG…EIVA), 177–194 (AWRW…LMSV), 222–241 (VFLC…FLMA), and 247–269 (WWIV…RVVL).

This sequence belongs to the UbiA prenyltransferase family. Requires Mg(2+) as cofactor.

The protein localises to the cell membrane. The enzyme catalyses (2E,6E,10E,14E)-geranylfarnesyl diphosphate = somaliensene A + diphosphate. The catalysed reaction is (2E,6E,10E,14E)-geranylfarnesyl diphosphate = (-)-somaliensene B + diphosphate. The protein operates within secondary metabolite biosynthesis; terpenoid biosynthesis. Sesterterpene cyclase, which converts geranylfarnesyl diphosphate (GFPP) into the terpenes somaliensene A and somaliensene B. In Streptomyces somaliensis (strain ATCC 33201 / DSM 40738 / JCM 12659 / KCTC 9044 / NCTC 11332 / NRRL B-12077 / IP 733), this protein is Somaliensene A/B synthase.